The following is a 157-amino-acid chain: Crossover junction endodeoxyribonuclease RuvC (157 aa).

Catalysis depends on residues aspartate 7, glutamate 66, and aspartate 139. The Mg(2+) site is built by aspartate 7, glutamate 66, and aspartate 139.

It belongs to the RuvC family. In terms of assembly, homodimer which binds Holliday junction (HJ) DNA. The HJ becomes 2-fold symmetrical on binding to RuvC with unstacked arms; it has a different conformation from HJ DNA in complex with RuvA. In the full resolvosome a probable DNA-RuvA(4)-RuvB(12)-RuvC(2) complex forms which resolves the HJ. The cofactor is Mg(2+).

It localises to the cytoplasm. The catalysed reaction is Endonucleolytic cleavage at a junction such as a reciprocal single-stranded crossover between two homologous DNA duplexes (Holliday junction).. In terms of biological role, the RuvA-RuvB-RuvC complex processes Holliday junction (HJ) DNA during genetic recombination and DNA repair. Endonuclease that resolves HJ intermediates. Cleaves cruciform DNA by making single-stranded nicks across the HJ at symmetrical positions within the homologous arms, yielding a 5'-phosphate and a 3'-hydroxyl group; requires a central core of homology in the junction. The consensus cleavage sequence is 5'-(A/T)TT(C/G)-3'. Cleavage occurs on the 3'-side of the TT dinucleotide at the point of strand exchange. HJ branch migration catalyzed by RuvA-RuvB allows RuvC to scan DNA until it finds its consensus sequence, where it cleaves and resolves the cruciform DNA. The chain is Crossover junction endodeoxyribonuclease RuvC from Helicobacter pylori (strain ATCC 700392 / 26695) (Campylobacter pylori).